Here is a 478-residue protein sequence, read N- to C-terminus: tRNA (adenine(58)-N(1))-methyltransferase non-catalytic subunit TRM6 (478 aa).

The tract at residues 456-478 (SENATAADSSEKLAEHGAKKQKI) is disordered. A compositionally biased stretch (basic and acidic residues) spans 464–478 (SSEKLAEHGAKKQKI).

It belongs to the TRM6/GCD10 family. In terms of assembly, heterotetramer; composed of two copies of TRM6/GCD10 and two copies of TRM61/GCD14.

Its subcellular location is the nucleus. Functionally, substrate-binding subunit of tRNA (adenine-N(1)-)-methyltransferase, which catalyzes the formation of N(1)-methyladenine at position 58 (m1A58) in initiator methionyl-tRNA. Also required for repression of GCN4 mRNA translation by the upstream open reading frames (uORFs) under conditions of amino acid sufficiency. This is tRNA (adenine(58)-N(1))-methyltransferase non-catalytic subunit TRM6 (GCD10) from Saccharomyces cerevisiae (strain ATCC 204508 / S288c) (Baker's yeast).